The primary structure comprises 449 residues: Phosphoglucosamine mutase (449 aa).

The active-site Phosphoserine intermediate is Ser-100. Residues Ser-100, Asp-241, Asp-243, and Asp-245 each coordinate Mg(2+). At Ser-100 the chain carries Phosphoserine.

This sequence belongs to the phosphohexose mutase family. Requires Mg(2+) as cofactor. Post-translationally, activated by phosphorylation.

The catalysed reaction is alpha-D-glucosamine 1-phosphate = D-glucosamine 6-phosphate. Functionally, catalyzes the conversion of glucosamine-6-phosphate to glucosamine-1-phosphate. The polypeptide is Phosphoglucosamine mutase (Clostridium botulinum (strain Kyoto / Type A2)).